A 109-amino-acid polypeptide reads, in one-letter code: Small ribosomal subunit protein bS16 (109 aa).

The interval 87 to 109 (ALRETPKKSAPKAKAQERAKAAG) is disordered. Basic and acidic residues predominate over residues 100–109 (KAQERAKAAG).

The protein belongs to the bacterial ribosomal protein bS16 family.

The sequence is that of Small ribosomal subunit protein bS16 from Rhodospirillum centenum (strain ATCC 51521 / SW).